Consider the following 264-residue polypeptide: MKPTTIASLQKCKQEKKRFATITAYDYSFAKLFADEGLNVMLVGDSLGMTVQGHDSTLPVTVADIAYHTAAVRRGAPNCLLLADLPFMAYATPEQAFENAATVMRAGANMVKIEGGEWLVETVQMLTERAVPVCGHLGLTPQSVNIFGGYKVQGRGDEAADRLLSDALALEAAGAQLLVLECVPVELAKRITEALAIPVIGIGAGNVTDGQILVMHDAFGITGGHIPKFAKNFLAETGDIRAAVRQYMAEVESGVYPGEEHSFH.

2 residues coordinate Mg(2+): Asp-45 and Asp-84. 3-methyl-2-oxobutanoate-binding positions include 45–46, Asp-84, and Lys-112; that span reads DS. Glu-114 contributes to the Mg(2+) binding site. Glu-181 serves as the catalytic Proton acceptor.

Belongs to the PanB family. In terms of assembly, homodecamer; pentamer of dimers. Requires Mg(2+) as cofactor.

It localises to the cytoplasm. The enzyme catalyses 3-methyl-2-oxobutanoate + (6R)-5,10-methylene-5,6,7,8-tetrahydrofolate + H2O = 2-dehydropantoate + (6S)-5,6,7,8-tetrahydrofolate. Its pathway is cofactor biosynthesis; (R)-pantothenate biosynthesis; (R)-pantoate from 3-methyl-2-oxobutanoate: step 1/2. Functionally, catalyzes the reversible reaction in which hydroxymethyl group from 5,10-methylenetetrahydrofolate is transferred onto alpha-ketoisovalerate to form ketopantoate. The polypeptide is 3-methyl-2-oxobutanoate hydroxymethyltransferase (Escherichia coli O17:K52:H18 (strain UMN026 / ExPEC)).